Consider the following 215-residue polypeptide: Pyrophosphate-energized proton pump 2 (215 aa).

The next 5 membrane-spanning stretches (helical) occupy residues 16–36, 51–71, 86–106, 136–156, and 164–184; these read VYPLAICGACILTSIAGTFFV, GLIATGVFSVAGLAVATYATV, GTNLFFCGLVGLVVTALIVVI, GLAVSLESTALPAIVIVGGII, and LFGTGIAVTAMLGLAGMIVAL.

Belongs to the H(+)-translocating pyrophosphatase (TC 3.A.10) family. Homodimer. Requires Mg(2+) as cofactor.

It is found in the cell inner membrane. It carries out the reaction diphosphate + H2O + H(+)(in) = 2 phosphate + 2 H(+)(out). Functionally, proton pump that utilizes the energy of pyrophosphate hydrolysis as the driving force for proton movement across the membrane. Generates a proton motive force. The polypeptide is Pyrophosphate-energized proton pump 2 (hppA2) (Rhizobium leguminosarum bv. trifolii).